A 361-amino-acid chain; its full sequence is Chorismate synthase (361 aa).

Arginine 47 serves as a coordination point for NADP(+). FMN contacts are provided by residues 124 to 126 (RAS), glycine 286, 301 to 305 (KPTAT), and arginine 327.

The protein belongs to the chorismate synthase family. In terms of assembly, homotetramer. FMNH2 is required as a cofactor.

The catalysed reaction is 5-O-(1-carboxyvinyl)-3-phosphoshikimate = chorismate + phosphate. It functions in the pathway metabolic intermediate biosynthesis; chorismate biosynthesis; chorismate from D-erythrose 4-phosphate and phosphoenolpyruvate: step 7/7. In terms of biological role, catalyzes the anti-1,4-elimination of the C-3 phosphate and the C-6 proR hydrogen from 5-enolpyruvylshikimate-3-phosphate (EPSP) to yield chorismate, which is the branch point compound that serves as the starting substrate for the three terminal pathways of aromatic amino acid biosynthesis. This reaction introduces a second double bond into the aromatic ring system. The polypeptide is Chorismate synthase (Prochlorococcus marinus (strain NATL1A)).